Reading from the N-terminus, the 141-residue chain is uncharacterized protein (141 aa).

This sequence belongs to the PhzA/PhzB family.

This is an uncharacterized protein from Pseudomonas aeruginosa (strain ATCC 15692 / DSM 22644 / CIP 104116 / JCM 14847 / LMG 12228 / 1C / PRS 101 / PAO1).